A 701-amino-acid chain; its full sequence is Ribosomal RNA large subunit methyltransferase K/L (701 aa).

The region spanning 44-155 (QAYKICLWSR…SDKLTVYLDL (112 aa)) is the THUMP domain.

The protein belongs to the methyltransferase superfamily. RlmKL family.

Its subcellular location is the cytoplasm. It carries out the reaction guanosine(2445) in 23S rRNA + S-adenosyl-L-methionine = N(2)-methylguanosine(2445) in 23S rRNA + S-adenosyl-L-homocysteine + H(+). The catalysed reaction is guanosine(2069) in 23S rRNA + S-adenosyl-L-methionine = N(2)-methylguanosine(2069) in 23S rRNA + S-adenosyl-L-homocysteine + H(+). Specifically methylates the guanine in position 2445 (m2G2445) and the guanine in position 2069 (m7G2069) of 23S rRNA. In Pseudoalteromonas atlantica (strain T6c / ATCC BAA-1087), this protein is Ribosomal RNA large subunit methyltransferase K/L.